The sequence spans 461 residues: Putative cytochrome P450 132 (461 aa).

Heme is bound at residue Cys-409.

Belongs to the cytochrome P450 family. The cofactor is heme.

The protein is Putative cytochrome P450 132 (cyp132) of Mycobacterium tuberculosis (strain ATCC 25618 / H37Rv).